A 115-amino-acid polypeptide reads, in one-letter code: MHEASLAGGILKLVEDAARREAFQRVTVLRLEVGQLAGVELRALKFALEAIAPGTALDGARLEFEEPAGQAWCMACSQTVPLAARGMACTGCGSYQLQPTGGTELRVMDMLVADE.

Histidine 2 contacts Ni(2+). Positions 73, 76, 89, and 92 each coordinate Zn(2+).

The protein belongs to the HypA/HybF family.

Its function is as follows. Involved in the maturation of [NiFe] hydrogenases. Required for nickel insertion into the metal center of the hydrogenase. This Polaromonas naphthalenivorans (strain CJ2) protein is Hydrogenase maturation factor HypA.